The sequence spans 1211 residues: Sterol 3-beta-glucosyltransferase (1211 aa).

Over residues 1 to 10 (MSQLRPRDSS) the composition is skewed to basic and acidic residues. Positions 1 to 61 (MSQLRPRDSS…DETEAEDDID (61 aa)) are disordered. In terms of domain architecture, GRAM 1 spans 196-235 (EKLKTTFDLSDDDEFVNDYPCWLLHEVFLQGHIYITSRYL). Residues 248-347 (VTMSGALSIR…WVTDLRKHIF (100 aa)) enclose the PH domain. Disordered stretches follow at residues 422–452 (LTDSDSSESDSDVSGSETNGRSTHRKSKLSR) and 500–531 (VVPNDNDSELKQDHAGDAPKDSEEPSTKPSNW). Positions 423–432 (TDSDSSESDS) are enriched in acidic residues. The segment covering 507–525 (SELKQDHAGDAPKDSEEPS) has biased composition (basic and acidic residues). The 67-residue stretch at 586–652 (SRFRKHFSLP…SDIENVYNLK (67 aa)) folds into the GRAM 2 domain. Positions 770, 771, 773, 1046, 1072, 1073, 1075, 1088, 1091, 1092, 1093, 1112, and 1113 each coordinate UDP-alpha-D-glucose.

This sequence belongs to the glycosyltransferase 28 family.

It localises to the cytoplasm. The protein resides in the preautophagosomal structure membrane. The catalysed reaction is a sterol + UDP-alpha-D-glucose = a sterol 3-beta-D-glucoside + UDP + H(+). It catalyses the reaction ergosterol + UDP-alpha-D-glucose = ergosteryl 3-beta-D-glucoside + UDP + H(+). In terms of biological role, sterol glycosyltransferase responsible for the glycosylation of ergosterol to form ergosterol-glucoside. Shows also activity in vitro on other sterols such as cholesterol, beta-sitosterol, stigmasterol and tomatidine. Probable sterol 3-beta-glucosyltransferase that mediates autophagic degradation of peroxisomes (pexophagy). The sequence is that of Sterol 3-beta-glucosyltransferase from Komagataella phaffii (strain GS115 / ATCC 20864) (Yeast).